A 339-amino-acid polypeptide reads, in one-letter code: MTVRVGINGFGRIGRNFYRALLAQQEQGTADIEVVAVNDITDNSTLAHLLKFDSILGRLPYDVSLEGEDTIVVGPAKIKALEVREGPAALPWGDLGVDVVVESTGLFTNAAKAKGHLDAGAKKVIISAPATDEDITVVLGVNDDKYDGSQNIISNASCTTNCLAPLTKVLDDEFGIVRGLMTTIHAYTQDQNLQDGPHKDLRRARAAALNIVPTSTGAAKAIGLVMPNLKGKLDGYALRVPIPTGSVTDLTAELKKPASVEDINAAFKAAAEGRLKGILKYYDAPIVSSDIVTDPHSSIFDSGLTKVIDNQAKVVSWYDNEWGYSNRLVDLVALVGKSL.

Residues 12 to 13 (RI), Asp39, Arg84, and Ser127 each bind NAD(+). Residues 157–159 (SCT), Thr188, Arg203, 216–217 (TG), and Arg239 contribute to the D-glyceraldehyde 3-phosphate site. Residue Cys158 is the Nucleophile of the active site. Asn320 contributes to the NAD(+) binding site.

It belongs to the glyceraldehyde-3-phosphate dehydrogenase family. In terms of assembly, homotetramer.

It is found in the cytoplasm. The catalysed reaction is D-glyceraldehyde 3-phosphate + phosphate + NAD(+) = (2R)-3-phospho-glyceroyl phosphate + NADH + H(+). Its pathway is carbohydrate degradation; glycolysis; pyruvate from D-glyceraldehyde 3-phosphate: step 1/5. In terms of biological role, catalyzes the oxidative phosphorylation of glyceraldehyde 3-phosphate (G3P) to 1,3-bisphosphoglycerate (BPG) using the cofactor NAD. The first reaction step involves the formation of a hemiacetal intermediate between G3P and a cysteine residue, and this hemiacetal intermediate is then oxidized to a thioester, with concomitant reduction of NAD to NADH. The reduced NADH is then exchanged with the second NAD, and the thioester is attacked by a nucleophilic inorganic phosphate to produce BPG. In Mycobacterium avium, this protein is Glyceraldehyde-3-phosphate dehydrogenase (gapA).